Reading from the N-terminus, the 161-residue chain is MAAKLILFVCATALVAQSVLSIGCGCGGRGYGGLGYGGLGYGGLGGGCGRGFSGGGLPVATASAAPTGLGIASENRYEGTVGVCGNLPFLGTADVAGEFPTAGIGEIDYGCGNGAVGITREGGFGYGAGYGDGYGLGFGGYGGGYGLGNGGYGGCGCGWGY.

The N-terminal stretch at Met1–Ser21 is a signal peptide. A left arm region spans residues Ile22–Phe52. Tandem repeats lie at residues Gly30 to Leu34, Gly35 to Leu39, and Gly40 to Leu44. Residues Gly30 to Leu44 are 3 X 5 AA tandem repeats of G-Y-G-G-L. The central domain stretch occupies residues Ser53 to Glu121. The segment at Gly122–Tyr161 is right arm (Gly-rich tandem repeats).

The protein belongs to the chorion protein family.

In terms of biological role, this protein is one of many from the eggshell of the silk moth. The protein is Chorion class B protein L12 of Bombyx mori (Silk moth).